The sequence spans 472 residues: MDKLGQIIKLGQLIYEQCEKMKYCRKQCQRLGNRVHGLLQPLQRLQAQGKKNLPDDITAALGRFDEVLKEANQQIEKFSKKSHIWKFVSVGNDKILFHEVNEKLRDVWEELLLLLQVYHWNTVSDVSQPASWQQEDRQDAEEDGNENMKVILMQLQISVEEINKTLKQCSLKPTQEIPQDLQIKEIPKEHLGPPWTKLKTSKMSTIYRGEYHRSPVTIKVFNNPQAESVGIVRFTFNDEIKTMKKFDSPNILRIFGICIDQTVKPPEFSIVMEYCELGTLRELLDREKDLTMSVRSLLVLRAARGLYRLHHSETLHRNISSSSFLVAGGYQVKLAGFELSKTQNSISRTAKSTKAERSSSTIYVSPERLKNPFCLYDIKAEIYSFGIVLWEIATGKIPFEGCDSKKIRELVAEDKKQEPVGQDCPELLREIINECRAHEPSQRPSVDGRSLSGRERILERLSAVEESTDKKV.

The N-terminal bundle and brace (NBB); mediates INSP6 binding stretch occupies residues 1 to 143; it reads MDKLGQIIKL…QEDRQDAEED (143 aa). Residues 61-81 adopt a coiled-coil conformation; it reads LGRFDEVLKEANQQIEKFSKK. S124 is modified (phosphoserine). Residues 138-229 adopt a coiled-coil conformation; sequence QDAEEDGNEN…VFNNPQAESV (92 aa). In terms of domain architecture, Protein kinase spans 192-456; that stretch reads GPPWTKLKTS…DGRSLSGRER (265 aa). Residues 198-206 and K219 each bind ATP; that span reads LKTSKMSTI. A phosphoserine; by RIPK3 mark is found at S345 and S347. A Phosphothreonine; by RIPK3 modification is found at T349. A Phosphoserine; by RIPK3 modification is found at S352.

It belongs to the protein kinase superfamily. Homooligomer. Homotrimer; forms homotrimers on necroptosis induction. Upon TNF-induced necrosis, forms in complex with PGAM5, RIPK1 and RIPK3. Within this complex, may play a role in the proper targeting of RIPK1-RIPK3 to its downstream effector PGAM5. Interacts with RIPK3; the interaction is direct and promotes its phosphorylation and subsequent activation. Post-translationally, phosphorylation by RIPK3 induces a conformational switch that is required for necroptosis. It also induces homotrimerization and localization to the plasma membrane. In terms of tissue distribution, highly expressed in thymus, colon, intestine, liver, spleen and lung. Expressed at much lower level in skeletal muscle, heart and kidney. Not detected in brain.

It localises to the cytoplasm. The protein localises to the cell membrane. It is found in the nucleus. Its activity is regulated as follows. Activated via binding to highly phosphorylated inositol phosphates such as inositolhexakisphosphate (InsP6) which mediates the release of an N-terminal auto-inhibitory region. Activation requires not only RIPK3-dependent phosphorylation but also binding to highly phosphorylated inositol phosphates. In terms of biological role, pseudokinase that plays a key role in TNF-induced necroptosis, a programmed cell death process. Does not have protein kinase activity. Activated following phosphorylation by RIPK3, leading to homotrimerization, localization to the plasma membrane and execution of programmed necrosis characterized by calcium influx and plasma membrane damage. In addition to TNF-induced necroptosis, necroptosis can also take place in the nucleus in response to orthomyxoviruses infection: following ZBP1 activation, which senses double-stranded Z-RNA structures, nuclear RIPK3 catalyzes phosphorylation and activation of MLKL, promoting disruption of the nuclear envelope and leakage of cellular DNA into the cytosol. Binds to highly phosphorylated inositol phosphates such as inositolhexakisphosphate (InsP6) which is essential for its necroptotic function. The polypeptide is Mixed lineage kinase domain-like protein (Mus musculus (Mouse)).